The primary structure comprises 257 residues: Ribosomal RNA small subunit methyltransferase A (257 aa).

Residues H12, L14, G39, E60, D83, and N101 each coordinate S-adenosyl-L-methionine.

Belongs to the class I-like SAM-binding methyltransferase superfamily. rRNA adenine N(6)-methyltransferase family. RsmA subfamily.

The protein localises to the cytoplasm. It carries out the reaction adenosine(1518)/adenosine(1519) in 16S rRNA + 4 S-adenosyl-L-methionine = N(6)-dimethyladenosine(1518)/N(6)-dimethyladenosine(1519) in 16S rRNA + 4 S-adenosyl-L-homocysteine + 4 H(+). Functionally, specifically dimethylates two adjacent adenosines (A1518 and A1519) in the loop of a conserved hairpin near the 3'-end of 16S rRNA in the 30S particle. May play a critical role in biogenesis of 30S subunits. The sequence is that of Ribosomal RNA small subunit methyltransferase A from Nitrosomonas europaea (strain ATCC 19718 / CIP 103999 / KCTC 2705 / NBRC 14298).